The sequence spans 904 residues: Myelin regulatory factor-like protein (904 aa).

A disordered region spans residues 46–132 (LQRQLPDTPP…ATCRHQTGPS (87 aa)). A compositionally biased stretch (polar residues) spans 100 to 117 (PSQSMAGQTHSSFQNGYP). A DNA-binding region (NDT80) is located at residues 108-400 (THSSFQNGYP…SNPGQFENDS (293 aa)). Residues 446–554 (SDSRVKENIQ…KLTNNLEERI (109 aa)) form the Peptidase S74 domain. Positions 538-575 (GAVKQLCKLTNNLEERIEELEIWNKKLARLKRLSSSWK) form a coiled coil. Residues 624 to 644 (LVVVLIAVMAFCALTIVALYI) traverse the membrane as a helical segment. The interval 656–688 (NLPLSNMTSSPEPALSSTAPTSAPHTTPETTQT) is disordered. Low complexity predominate over residues 663-688 (TSSPEPALSSTAPTSAPHTTPETTQT).

This sequence belongs to the MRF family.

The protein localises to the membrane. The chain is Myelin regulatory factor-like protein (Myrfl) from Mus musculus (Mouse).